The primary structure comprises 241 residues: Uridylate kinase (241 aa).

15 to 18 (KLSG) contributes to the ATP binding site. The involved in allosteric activation by GTP stretch occupies residues 23-28 (GAEGFG). Glycine 57 is a binding site for UMP. 2 residues coordinate ATP: glycine 58 and arginine 62. Residues aspartate 77 and 138–145 (TGNPFFTT) each bind UMP. ATP is bound by residues threonine 165, tyrosine 171, and aspartate 174.

Belongs to the UMP kinase family. Homohexamer.

Its subcellular location is the cytoplasm. The catalysed reaction is UMP + ATP = UDP + ADP. The protein operates within pyrimidine metabolism; CTP biosynthesis via de novo pathway; UDP from UMP (UMPK route): step 1/1. Its activity is regulated as follows. Allosterically activated by GTP. Inhibited by UTP. Its function is as follows. Catalyzes the reversible phosphorylation of UMP to UDP. This chain is Uridylate kinase, found in Serratia proteamaculans (strain 568).